We begin with the raw amino-acid sequence, 537 residues long: Membrane protein insertase YidC (537 aa).

Helical transmembrane passes span 5-25 (LIIAVLLSIGVLYAYSFIFPT), 353-373 (GNYGIAIIIITFILKLVFFPL), 418-438 (VNPLGGCLPMVVQIPVFFGLY), and 495-515 (MLMLPIVFTFMFLNFPSGLVI).

This sequence belongs to the OXA1/ALB3/YidC family. Type 1 subfamily. In terms of assembly, interacts with the Sec translocase complex via SecD. Specifically interacts with transmembrane segments of nascent integral membrane proteins during membrane integration.

Its subcellular location is the cell inner membrane. Its function is as follows. Required for the insertion and/or proper folding and/or complex formation of integral membrane proteins into the membrane. Involved in integration of membrane proteins that insert both dependently and independently of the Sec translocase complex, as well as at least some lipoproteins. Aids folding of multispanning membrane proteins. This Citrifermentans bemidjiense (strain ATCC BAA-1014 / DSM 16622 / JCM 12645 / Bem) (Geobacter bemidjiensis) protein is Membrane protein insertase YidC.